A 99-amino-acid polypeptide reads, in one-letter code: Aspartyl/glutamyl-tRNA(Asn/Gln) amidotransferase subunit C (99 aa).

Belongs to the GatC family. In terms of assembly, heterotrimer of A, B and C subunits.

It carries out the reaction L-glutamyl-tRNA(Gln) + L-glutamine + ATP + H2O = L-glutaminyl-tRNA(Gln) + L-glutamate + ADP + phosphate + H(+). The catalysed reaction is L-aspartyl-tRNA(Asn) + L-glutamine + ATP + H2O = L-asparaginyl-tRNA(Asn) + L-glutamate + ADP + phosphate + 2 H(+). Functionally, allows the formation of correctly charged Asn-tRNA(Asn) or Gln-tRNA(Gln) through the transamidation of misacylated Asp-tRNA(Asn) or Glu-tRNA(Gln) in organisms which lack either or both of asparaginyl-tRNA or glutaminyl-tRNA synthetases. The reaction takes place in the presence of glutamine and ATP through an activated phospho-Asp-tRNA(Asn) or phospho-Glu-tRNA(Gln). The polypeptide is Aspartyl/glutamyl-tRNA(Asn/Gln) amidotransferase subunit C (Ralstonia pickettii (strain 12J)).